A 679-amino-acid polypeptide reads, in one-letter code: Single-strand DNA endonuclease ASTE1 (679 aa).

The interval 351 to 400 (TILPTQVENMQQPNAHRISQPIRQIIYGLLLNASPHLDKTSWNALPPQPL) is interaction with SHLD2. Positions 625–645 (RSNSKKKRQKKQNTSCSKNRG) are disordered. The segment covering 626–635 (SNSKKKRQKK) has biased composition (basic residues).

It belongs to the asteroid family. Interacts with SHLD1, SHLD2, SHLD3, RIF1 and MAD2L2/REV7.

Structure-specific DNA endonuclease that specifically cleaves single-stranded DNA and 3' overhang DNA. Contributes to the control of DNA double-strand break repair choice by antagonizing BRCA1-dependent homologous recombination (HR) and promoting non-homologous end-joining (NHEJ). Recruited to the single-stranded DNA ends by SHLD2 and cleaves the 3' exposed DNA ends, therefore inhibiting DNA end resection (necessary for HR) and promoting DNA end protection (necessary for NHEJ). The sequence is that of Single-strand DNA endonuclease ASTE1 (ASTE1) from Homo sapiens (Human).